A 186-amino-acid chain; its full sequence is CASP-like protein 4C2 (186 aa).

Residues 1-31 lie on the Cytoplasmic side of the membrane; sequence MRSPQPHRSGGDTQQHFQSTVSVQKLKRFNS. A helical membrane pass occupies residues 32–52; sequence LILVFRFAAFCFSLASAVFML. Residues 53 to 71 are Extracellular-facing; sequence TNSRGSDSLHWYNFDAFRY. Residues 72–92 traverse the membrane as a helical segment; the sequence is VFAANAIVAIYSLFEMAASVW. Residues 93-103 are Cytoplasmic-facing; sequence EISRNATLFPE. The helical transmembrane segment at 104–124 threads the bilayer; the sequence is ICQVWFDFGHDQVFAYLLLSA. Residues 125–150 are Extracellular-facing; it reads NTAGTELARTLKDTCTDNKAFCVQSD. A helical transmembrane segment spans residues 151–171; sequence IAIVLGFAGFLFLGISSLFSG. Residues 172–186 are Cytoplasmic-facing; the sequence is FRVVCFIINGSRFYV.

It belongs to the Casparian strip membrane proteins (CASP) family. As to quaternary structure, homodimer and heterodimers.

Its subcellular location is the cell membrane. In Populus trichocarpa (Western balsam poplar), this protein is CASP-like protein 4C2.